A 336-amino-acid chain; its full sequence is Melanoma-associated antigen B17 (336 aa).

The segment covering 1-17 has biased composition (basic residues); the sequence is MPRGQASKRRAREKRRQ. A disordered region spans residues 1 to 108; sequence MPRGQASKRR…SSSESTGRDL (108 aa). 2 stretches are compositionally biased toward low complexity: residues 39 to 54 and 62 to 80; these read PSSS…QSFP and SQRA…LTSS. Residues 90–103 show a composition bias toward polar residues; that stretch reads ESPNSFHGPSSSES. Residues 109 to 336 enclose the MAGE domain; it reads LNTKTGELVQ…RARASRSFQP (228 aa).

The chain is Melanoma-associated antigen B17 (MAGEB17) from Homo sapiens (Human).